Reading from the N-terminus, the 229-residue chain is MASSNFFLLIPLIALVTTQAMASDPSPLQDLCVADKNSPVRVNGFPCKDAKDVSVDDFFLAANLDKPMDITKSKAGSNVTLINVMKLAGLNTLGISMARIDYAPKGQNPPHTHPRATEILSVIEGSLYVGFVTSNQANGENKLFTKTLNKGDVFVFPEGLIHFQFNPSYDKPAAAIVALSSQNPGAITIANAVFGSNPPISDDVLAKAFQVDKKAVDWLQAQFWENNHN.

The signal sequence occupies residues 1-22; sequence MASSNFFLLIPLIALVTTQAMA. A disulfide bridge links cysteine 32 with cysteine 47. Positions 62-217 constitute a Cupin type-1 domain; sequence ANLDKPMDIT…AFQVDKKAVD (156 aa). Asparagine 78 is a glycosylation site (N-linked (GlcNAc...) asparagine). 4 residues coordinate Mn(2+): histidine 111, histidine 113, glutamate 118, and histidine 162.

The protein belongs to the germin family. Oligomer (believed to be a pentamer but probably hexamer).

It localises to the secreted. It is found in the extracellular space. The protein localises to the apoplast. Its function is as follows. May play a role in plant defense. Probably has no oxalate oxidase activity even if the active site is conserved. In Oryza sativa subsp. japonica (Rice), this protein is Putative germin-like protein 12-3.